We begin with the raw amino-acid sequence, 136 residues long: Transmembrane protein 203 (136 aa).

Residues 1–51 (MLFSLRELVQWLGFATFEIFVHLLALLVFSVLLALRVDGLTPGLSWWNVFV) are interaction with STING1. The next 4 helical transmembrane spans lie at 14–34 (FATF…VLLA), 50–72 (FVPF…VRLF), 81–101 (VLRL…EMLL), and 112–132 (LWFG…MIRA). A required for lysosomal localization of the STING-TMEM203 complex region spans residues 52-136 (PFFAADGLST…LLMIRACRVN (85 aa)).

Homodimer. Interacts with ATP2A2 and ITPR3. Interacts with STIM1 and STING1 (via transmembrane domain).

The protein resides in the endoplasmic reticulum membrane. The protein localises to the endoplasmic reticulum-Golgi intermediate compartment. Its subcellular location is the lysosome membrane. Functionally, involved in the regulation of cellular calcium homeotasis. Required for spermatogenesis. Acts as a regulator of STING-mediated inflammatory signaling in macrophages. Forms a complex with STING, promoting the activity of TBK1 kinase and the transcription factor IRF3, leading to activation of type I interferon expression. This is Transmembrane protein 203 (Tmem203) from Mus musculus (Mouse).